A 369-amino-acid chain; its full sequence is MKWKLFYFFTLLTFTPAYFFIEQNQWVILASFLVIVNLISLTVHWKFGLLLISCSAALLAYCQLMPEFQLAKLMKANWLRTPFISWLDQHTSGVFNQYLKLFLINETTKNTLYQSAIQLNIVHLFVISGFHLSFLFGVMERWLYKRFYINKITGFVMLLLYLFLVGFAFSALRVFVSKLLRQMFPKQLPENNLGLTALLIILMSPGALHNFGFNFSFLACFVLFAINKVKLWKPLQAVLTSTLILIVVSPITLHLNRKLNALSVFHNLLFTPIALFYFCASWLLLPLIPWMGNSLVGFYWPLPWLSQWALNTTVFLNLPKPNWVFYLVYYGLWGLLYTVGTVFYYDRSLWCRYWVNSPAVKPTAQPSRL.

Helical transmembrane passes span 25–45 (QWVI…TVHW), 47–67 (FGLL…LMPE), 119–139 (LNIV…FGVM), 152–172 (ITGF…FSAL), 206–226 (GALH…LFAI), 235–255 (LQAV…TLHL), 268–288 (LLFT…LPLI), 295–315 (LVGF…TTVF), and 323–343 (WVFY…GTVF).

The protein to B.subtilis ComEC.

It is found in the cell membrane. This is an uncharacterized protein from Mycoplasma pneumoniae (strain ATCC 29342 / M129 / Subtype 1) (Mycoplasmoides pneumoniae).